The chain runs to 346 residues: Large ribosomal subunit protein uL1c (346 aa).

The N-terminal 70 residues, 1–70 (MAACATHSSL…RASNHKFIVS (70 aa)), are a transit peptide targeting the chloroplast. Tyrosine 129 is subject to Phosphotyrosine. Phosphothreonine is present on threonine 177. Serine 197 carries the post-translational modification Phosphoserine.

The protein belongs to the universal ribosomal protein uL1 family. In terms of assembly, part of the 50S ribosomal subunit.

It localises to the plastid. The protein resides in the chloroplast. Its function is as follows. This protein binds directly to 23S ribosomal RNA. In Arabidopsis thaliana (Mouse-ear cress), this protein is Large ribosomal subunit protein uL1c (RPL1).